A 230-amino-acid chain; its full sequence is Nucleoside diphosphate kinase 2, chloroplastic (230 aa).

The transit peptide at 1–64 (MEAMAVFSGS…SYPKTFRTRS (64 aa)) directs the protein to the chloroplast. The ATP site is built by Lys-90, Phe-138, Arg-166, Thr-172, Arg-183, and Asn-193. His-196 serves as the catalytic Pros-phosphohistidine intermediate.

The protein belongs to the NDK family. Mg(2+) serves as cofactor.

Its subcellular location is the plastid. It is found in the chloroplast. The enzyme catalyses a 2'-deoxyribonucleoside 5'-diphosphate + ATP = a 2'-deoxyribonucleoside 5'-triphosphate + ADP. It catalyses the reaction a ribonucleoside 5'-diphosphate + ATP = a ribonucleoside 5'-triphosphate + ADP. Major role in the synthesis of nucleoside triphosphates other than ATP. The ATP gamma phosphate is transferred to the NDP beta phosphate via a ping-pong mechanism, using a phosphorylated active-site intermediate. The chain is Nucleoside diphosphate kinase 2, chloroplastic (NDPK2) from Pisum sativum (Garden pea).